The primary structure comprises 193 residues: Imidazoleglycerol-phosphate dehydratase (193 aa).

Belongs to the imidazoleglycerol-phosphate dehydratase family.

The protein localises to the cytoplasm. The catalysed reaction is D-erythro-1-(imidazol-4-yl)glycerol 3-phosphate = 3-(imidazol-4-yl)-2-oxopropyl phosphate + H2O. It functions in the pathway amino-acid biosynthesis; L-histidine biosynthesis; L-histidine from 5-phospho-alpha-D-ribose 1-diphosphate: step 6/9. The polypeptide is Imidazoleglycerol-phosphate dehydratase (Saccharolobus islandicus (strain M.14.25 / Kamchatka #1) (Sulfolobus islandicus)).